The sequence spans 334 residues: Endochitinase 3 (334 aa).

Positions 1–23 are cleaved as a signal peptide; that stretch reads MRLLEFTALSSLLVLFLLLAVSA. In terms of domain architecture, Chitin-binding type-1 spans 24–65; sequence EQCGKQAGGARCPSGMCCSNFGWCGNTQDYCGPGKCQSQCPS. Disulfide bonds link Cys26-Cys41, Cys35-Cys47, Cys40-Cys54, and Cys59-Cys63. A disordered region spans residues 64–84; sequence PSGPGPTPRPPTPTPGPSTGD. Positions 66–79 are enriched in pro residues; it reads GPGPTPRPPTPTPG. Residues Pro73, Pro74, and Pro76 each carry the 4-hydroxyproline modification. 3 cysteine pairs are disulfide-bonded: Cys106–Cys168, Cys180–Cys188, and Cys287–Cys319. Glu150 acts as the Proton donor in catalysis. A propeptide spans 328–334 (removed in mature form); the sequence is GLLLETM.

Belongs to the glycosyl hydrolase 19 family. Chitinase class I subfamily. Post-translationally, the 4-hydroxyproline residues are not glycosylated in this plant vacuolar protein.

It is found in the vacuole. The enzyme catalyses Random endo-hydrolysis of N-acetyl-beta-D-glucosaminide (1-&gt;4)-beta-linkages in chitin and chitodextrins.. Functionally, defense against chitin-containing fungal pathogens. This is Endochitinase 3 (CHN14) from Nicotiana tabacum (Common tobacco).